The sequence spans 82 residues: uncharacterized protein (82 aa).

This is an uncharacterized protein from Treponema pallidum (strain Nichols).